A 706-amino-acid chain; its full sequence is Triadin (706 aa).

The segment at Met1–Pro28 is disordered. Residues Met1–Pro47 are Cytoplasmic-facing. Polar residues predominate over residues Gly8–Val24. The chain crosses the membrane as a helical span at residues Ala48 to Phe68. At Asp69–Gln706 the chain is on the lumenal side. N-linked (GlcNAc...) asparagine glycosylation occurs at Asn75. The segment covering Asp117–Glu127 has biased composition (acidic residues). Disordered stretches follow at residues Asp117 to Asp265, Asp281 to Lys663, and Phe684 to Gln706. Basic and acidic residues-rich tracts occupy residues Asp128–Glu254, Pro309–Asp358, Thr372–Val432, Ala443–Pro518, Ile525–Leu552, Lys570–Lys588, and Glu599–His621. N-linked (GlcNAc...) asparagine glycosylation occurs at Asn625. Basic and acidic residues predominate over residues Lys628–Glu651.

As to quaternary structure, interacts with CASQ2. Homooligomer of variable subunit number; disulfide-linked. Interacts with CASQ1 and RYR1 in skeletal muscle. Phosphorylated by CaMK2. In terms of processing, N-glycosylated. In terms of tissue distribution, detected in skeletal muscle and in heart (at protein level). Detected in skeletal muscle and in heart.

Its subcellular location is the sarcoplasmic reticulum membrane. In terms of biological role, contributes to the regulation of lumenal Ca2+ release via the sarcoplasmic reticulum calcium release channels RYR1 and RYR2, a key step in triggering skeletal and heart muscle contraction. Required for normal organization of the triad junction, where T-tubules and the sarcoplasmic reticulum terminal cisternae are in close contact. Required for normal skeletal muscle strength. Plays a role in excitation-contraction coupling in the heart and in regulating the rate of heart beats. The chain is Triadin (TRDN) from Oryctolagus cuniculus (Rabbit).